Consider the following 351-residue polypeptide: dTDP-glucose 4,6-dehydratase (351 aa).

NAD(+) contacts are provided by residues 12 to 13 (FI), 32 to 35 (DALT), 58 to 59 (DI), 80 to 84 (FAAES), and Thr99. Ser84 is a substrate binding site. Residue Thr133 coordinates substrate. Catalysis depends on Asp134, which acts as the Proton donor. Residues Glu135 and Tyr158 each act as proton acceptor in the active site. Residue 158–162 (YSASK) participates in NAD(+) binding. Asn187 is a substrate binding site. An NAD(+)-binding site is contributed by Asn188. Substrate is bound by residues 197 to 198 (KL), 213 to 215 (PVY), Arg222, Asn257, and 289 to 293 (DRPGH).

This sequence belongs to the NAD(P)-dependent epimerase/dehydratase family. dTDP-glucose dehydratase subfamily. In terms of assembly, homodimer. It depends on NAD(+) as a cofactor.

The catalysed reaction is dTDP-alpha-D-glucose = dTDP-4-dehydro-6-deoxy-alpha-D-glucose + H2O. The protein operates within carbohydrate biosynthesis; dTDP-L-rhamnose biosynthesis. Its pathway is bacterial outer membrane biogenesis; LPS O-antigen biosynthesis. Its function is as follows. Catalyzes the dehydration of dTDP-D-glucose to form dTDP-6-deoxy-D-xylo-4-hexulose via a three-step process involving oxidation, dehydration and reduction. This is dTDP-glucose 4,6-dehydratase (rfbB) from Xanthomonas campestris pv. campestris (strain ATCC 33913 / DSM 3586 / NCPPB 528 / LMG 568 / P 25).